We begin with the raw amino-acid sequence, 105 residues long: Cytochrome c-553-like (105 aa).

The first 29 residues, 1–29 (MAGIVSLVILAVALFSFMNFDPYVSQVLA), serve as a signal peptide directing secretion. Heme c contacts are provided by cysteine 45, cysteine 48, histidine 49, and methionine 85.

Post-translationally, binds 1 heme c group covalently per subunit.

The polypeptide is Cytochrome c-553-like (cytM) (Synechocystis sp. (strain ATCC 27184 / PCC 6803 / Kazusa)).